The following is a 368-amino-acid chain: UDP-N-acetylglucosamine--N-acetylmuramyl-(pentapeptide) pyrophosphoryl-undecaprenol N-acetylglucosamine transferase (368 aa).

Residues 14-16 (TGG), Asn-125, Arg-168, Ser-196, and Gln-297 each bind UDP-N-acetyl-alpha-D-glucosamine.

It belongs to the glycosyltransferase 28 family. MurG subfamily.

It localises to the cell inner membrane. The enzyme catalyses di-trans,octa-cis-undecaprenyl diphospho-N-acetyl-alpha-D-muramoyl-L-alanyl-D-glutamyl-meso-2,6-diaminopimeloyl-D-alanyl-D-alanine + UDP-N-acetyl-alpha-D-glucosamine = di-trans,octa-cis-undecaprenyl diphospho-[N-acetyl-alpha-D-glucosaminyl-(1-&gt;4)]-N-acetyl-alpha-D-muramoyl-L-alanyl-D-glutamyl-meso-2,6-diaminopimeloyl-D-alanyl-D-alanine + UDP + H(+). It participates in cell wall biogenesis; peptidoglycan biosynthesis. In terms of biological role, cell wall formation. Catalyzes the transfer of a GlcNAc subunit on undecaprenyl-pyrophosphoryl-MurNAc-pentapeptide (lipid intermediate I) to form undecaprenyl-pyrophosphoryl-MurNAc-(pentapeptide)GlcNAc (lipid intermediate II). In Nitrobacter winogradskyi (strain ATCC 25391 / DSM 10237 / CIP 104748 / NCIMB 11846 / Nb-255), this protein is UDP-N-acetylglucosamine--N-acetylmuramyl-(pentapeptide) pyrophosphoryl-undecaprenol N-acetylglucosamine transferase.